Reading from the N-terminus, the 377-residue chain is 23S rRNA (uracil(747)-C(5))-methyltransferase RlmC (377 aa).

[4Fe-4S] cluster-binding residues include cysteine 3, cysteine 11, cysteine 14, and cysteine 87. Residues glutamine 212, phenylalanine 241, glutamate 262, and asparagine 307 each contribute to the S-adenosyl-L-methionine site. Cysteine 334 (nucleophile) is an active-site residue.

Belongs to the class I-like SAM-binding methyltransferase superfamily. RNA M5U methyltransferase family. RlmC subfamily.

The enzyme catalyses uridine(747) in 23S rRNA + S-adenosyl-L-methionine = 5-methyluridine(747) in 23S rRNA + S-adenosyl-L-homocysteine + H(+). Its function is as follows. Catalyzes the formation of 5-methyl-uridine at position 747 (m5U747) in 23S rRNA. The sequence is that of 23S rRNA (uracil(747)-C(5))-methyltransferase RlmC from Photorhabdus laumondii subsp. laumondii (strain DSM 15139 / CIP 105565 / TT01) (Photorhabdus luminescens subsp. laumondii).